The primary structure comprises 294 residues: Elongation factor Ts (294 aa).

Positions 82–85 are involved in Mg(2+) ion dislocation from EF-Tu; it reads TDFV.

The protein belongs to the EF-Ts family.

The protein localises to the cytoplasm. In terms of biological role, associates with the EF-Tu.GDP complex and induces the exchange of GDP to GTP. It remains bound to the aminoacyl-tRNA.EF-Tu.GTP complex up to the GTP hydrolysis stage on the ribosome. This chain is Elongation factor Ts, found in Psychrobacter arcticus (strain DSM 17307 / VKM B-2377 / 273-4).